The primary structure comprises 324 residues: Phospho-N-acetylmuramoyl-pentapeptide-transferase (324 aa).

Transmembrane regions (helical) follow at residues 5–25 (VILF…PILI), 50–70 (GTPT…AIVM), 77–97 (LSAE…LGFL), 117–137 (LIGQ…CHFS), 147–167 (LSID…VGGS), 176–196 (LDGL…ILAW), 203–223 (VAIF…FNAH), 227–247 (VFMG…VAIL), 250–270 (LEIL…SVIL), and 302–322 (VVVT…YIEV).

It belongs to the glycosyltransferase 4 family. MraY subfamily. The cofactor is Mg(2+).

The protein localises to the cell membrane. It catalyses the reaction UDP-N-acetyl-alpha-D-muramoyl-L-alanyl-gamma-D-glutamyl-meso-2,6-diaminopimeloyl-D-alanyl-D-alanine + di-trans,octa-cis-undecaprenyl phosphate = di-trans,octa-cis-undecaprenyl diphospho-N-acetyl-alpha-D-muramoyl-L-alanyl-D-glutamyl-meso-2,6-diaminopimeloyl-D-alanyl-D-alanine + UMP. It participates in cell wall biogenesis; peptidoglycan biosynthesis. Functionally, catalyzes the initial step of the lipid cycle reactions in the biosynthesis of the cell wall peptidoglycan: transfers peptidoglycan precursor phospho-MurNAc-pentapeptide from UDP-MurNAc-pentapeptide onto the lipid carrier undecaprenyl phosphate, yielding undecaprenyl-pyrophosphoryl-MurNAc-pentapeptide, known as lipid I. The chain is Phospho-N-acetylmuramoyl-pentapeptide-transferase from Bacillus velezensis (strain DSM 23117 / BGSC 10A6 / LMG 26770 / FZB42) (Bacillus amyloliquefaciens subsp. plantarum).